The primary structure comprises 319 residues: Acetyl-coenzyme A carboxylase carboxyl transferase subunit alpha (319 aa).

One can recognise a CoA carboxyltransferase C-terminal domain in the interval 38 to 293; it reads HALQDKLRLR…KAVLLNELDA (256 aa).

Belongs to the AccA family. Acetyl-CoA carboxylase is a heterohexamer composed of biotin carboxyl carrier protein (AccB), biotin carboxylase (AccC) and two subunits each of ACCase subunit alpha (AccA) and ACCase subunit beta (AccD).

It is found in the cytoplasm. The enzyme catalyses N(6)-carboxybiotinyl-L-lysyl-[protein] + acetyl-CoA = N(6)-biotinyl-L-lysyl-[protein] + malonyl-CoA. It functions in the pathway lipid metabolism; malonyl-CoA biosynthesis; malonyl-CoA from acetyl-CoA: step 1/1. Component of the acetyl coenzyme A carboxylase (ACC) complex. First, biotin carboxylase catalyzes the carboxylation of biotin on its carrier protein (BCCP) and then the CO(2) group is transferred by the carboxyltransferase to acetyl-CoA to form malonyl-CoA. The sequence is that of Acetyl-coenzyme A carboxylase carboxyl transferase subunit alpha from Stenotrophomonas maltophilia (strain R551-3).